The chain runs to 345 residues: Phosphoribosylformylglycinamidine cyclo-ligase (345 aa).

The protein belongs to the AIR synthase family.

It is found in the cytoplasm. It catalyses the reaction 2-formamido-N(1)-(5-O-phospho-beta-D-ribosyl)acetamidine + ATP = 5-amino-1-(5-phospho-beta-D-ribosyl)imidazole + ADP + phosphate + H(+). The protein operates within purine metabolism; IMP biosynthesis via de novo pathway; 5-amino-1-(5-phospho-D-ribosyl)imidazole from N(2)-formyl-N(1)-(5-phospho-D-ribosyl)glycinamide: step 2/2. The chain is Phosphoribosylformylglycinamidine cyclo-ligase from Shewanella amazonensis (strain ATCC BAA-1098 / SB2B).